A 490-amino-acid polypeptide reads, in one-letter code: N-succinylglutamate 5-semialdehyde dehydrogenase (490 aa).

Residue 220–225 (GSANTG) participates in NAD(+) binding. Catalysis depends on residues Glu-243 and Cys-277.

Belongs to the aldehyde dehydrogenase family. AstD subfamily.

It carries out the reaction N-succinyl-L-glutamate 5-semialdehyde + NAD(+) + H2O = N-succinyl-L-glutamate + NADH + 2 H(+). It participates in amino-acid degradation; L-arginine degradation via AST pathway; L-glutamate and succinate from L-arginine: step 4/5. Catalyzes the NAD-dependent reduction of succinylglutamate semialdehyde into succinylglutamate. In Shigella dysenteriae serotype 1 (strain Sd197), this protein is N-succinylglutamate 5-semialdehyde dehydrogenase.